Consider the following 521-residue polypeptide: Type II methyltransferase M.AluI (521 aa).

The 484-residue stretch at 8–491 (YSFVDLFAGI…REHVRRDRAL (484 aa)) folds into the SAM-dependent MTase C5-type domain. C84 is a catalytic residue.

The protein belongs to the class I-like SAM-binding methyltransferase superfamily. C5-methyltransferase family.

The enzyme catalyses a 2'-deoxycytidine in DNA + S-adenosyl-L-methionine = a 5-methyl-2'-deoxycytidine in DNA + S-adenosyl-L-homocysteine + H(+). In terms of biological role, a methylase, recognizes the double-stranded sequence 5'-AGCT-3', methylates C-3 on both strands, and protects the DNA from cleavage by the AluI endonuclease. This is Type II methyltransferase M.AluI from Cellulosimicrobium cellulans (Arthrobacter luteus).